Reading from the N-terminus, the 503-residue chain is ATP synthase subunit alpha (503 aa).

Position 170–177 (170–177 (GDRKTGKT)) interacts with ATP.

Belongs to the ATPase alpha/beta chains family. F-type ATPases have 2 components, CF(1) - the catalytic core - and CF(0) - the membrane proton channel. CF(1) has five subunits: alpha(3), beta(3), gamma(1), delta(1), epsilon(1). CF(0) has four main subunits: a(1), b(1), b'(1) and c(9-12).

The protein localises to the cellular thylakoid membrane. The catalysed reaction is ATP + H2O + 4 H(+)(in) = ADP + phosphate + 5 H(+)(out). Functionally, produces ATP from ADP in the presence of a proton gradient across the membrane. The alpha chain is a regulatory subunit. The protein is ATP synthase subunit alpha of Synechocystis sp. (strain ATCC 27184 / PCC 6803 / Kazusa).